A 733-amino-acid chain; its full sequence is Microtubule-associated protein tau (733 aa).

The segment covering 1–16 (MADPRQEFDTMEDHAG) has biased composition (basic and acidic residues). A disordered region spans residues 1-548 (MADPRQEFDT…PVPMPDLKNV (548 aa)). An N-acetylalanine modification is found at A2. Y18 bears the Phosphotyrosine; by FYN mark. A Glycyl lysine isopeptide (Lys-Gly) (interchain with G-Cter in ubiquitin) cross-link involves residue K33. Residues S35 and S50 each carry the phosphoserine modification. Residues 50 to 60 (SETSDAKSTPT) are compositionally biased toward polar residues. 3 positions are modified to phosphothreonine: T58, T60, and T100. R115 is modified (omega-N-methylarginine). A compositionally biased stretch (polar residues) spans 126–137 (SDWTRQQVSSMS). Positions 157 to 172 (RPEDIEKSHPASELLR) are enriched in basic and acidic residues. S188 is subject to Phosphoserine. Over residues 189–202 (EEEVDEDLTVDESS) the composition is skewed to acidic residues. The span at 203-212 (QDSPPSQASL) shows a compositional bias: polar residues. 2 stretches are compositionally biased toward basic and acidic residues: residues 270-294 (EEGHEAAPEFTFHVEIKASTPKEQD) and 354-366 (ASKDRTGNDEKKA). A compositionally biased stretch (polar residues) spans 413–427 (KHVSSVTPRNGSPGT). T445 is subject to Phosphothreonine. R447 carries the omega-N-methylarginine modification. S451 is modified (phosphoserine). N6,N6-dimethyllysine; alternate is present on K455. N6-acetyllysine; alternate is present on K455. 3 positions are modified to phosphothreonine: T461, T467, and T468. Position 470 is a phosphoserine (S470). T473 is modified (phosphothreonine). S477, S483, and S487 each carry phosphoserine. Positions 479–506 (EPPKSGERSGYSSPGSPGTPGSRSRTPS) are enriched in low complexity. Y489 carries the phosphotyrosine modification. A phosphoserine mark is found at S490, S491, and S494. A phosphothreonine mark is found at T497 and T504. S506 is subject to Phosphoserine. Phosphothreonine is present on T509. K517 bears the N6-acetyllysine mark. A Phosphothreonine modification is found at T523. S527, S529, and S531 each carry phosphoserine. Tau/MAP repeat units lie at residues 536–566 (QTAPVPMPDLKNVRSKIGSTENLKHQPGGGK), 567–597 (VQIINKKLDLSNVQSKCGSKDNIKHVPGGGS), 598–628 (VQIVYKPVDLSKVTSKCGSLGNIHHKPGGGQ), and 629–660 (VEVKSEKLDFKDRVQSKIGSLDNITHVPGGGN). A Glycyl lysine isopeptide (Lys-Gly) (interchain with G-Cter in ubiquitin) cross-link involves residue K546. K551 is modified (N6-acetyllysine; alternate). K551 carries the N6-methyllysine; alternate modification. K551 participates in a covalent cross-link: Glycyl lysine isopeptide (Lys-Gly) (interchain with G-Cter in ubiquitin); alternate. S554 carries the post-translational modification Phosphoserine; by MARK1, BRSK1, BRSK2 and PHK. K559 participates in a covalent cross-link: Glycyl lysine isopeptide (Lys-Gly) (interchain with G-Cter in ubiquitin). K573 carries the post-translational modification N6-acetyllysine; alternate. A Glycyl lysine isopeptide (Lys-Gly) (interchain with G-Cter in ubiquitin); alternate cross-link involves residue K573. Phosphoserine is present on residues S577 and S581. An N6-acetyllysine modification is found at K582. C583 and C614 form a disulfide bridge. The residue at position 585 (S585) is a Phosphoserine. Residue K590 is modified to N6-acetyllysine; alternate. K590 participates in a covalent cross-link: Glycyl lysine isopeptide (Lys-Gly) (interchain with G-Cter in ubiquitin); alternate. S597 is subject to Phosphoserine. Position 603 is an N6,N6-dimethyllysine; alternate (K603). K603, K609, and K613 each carry N6-acetyllysine; alternate. Glycyl lysine isopeptide (Lys-Gly) (interchain with G-Cter in ubiquitin); alternate cross-links involve residues K603, K609, and K613. Phosphoserine is present on S616. 3 positions are modified to N6-acetyllysine; alternate: K623, K635, and K639. Residues K623, K635, and K639 each participate in a glycyl lysine isopeptide (Lys-Gly) (interchain with G-Cter in ubiquitin); alternate cross-link. The residue at position 641 (R641) is an Omega-N-methylarginine. At S644 the chain carries Phosphoserine. Residue K645 forms a Glycyl lysine isopeptide (Lys-Gly) (interchain with G-Cter in ubiquitin) linkage. Residue S648 is modified to Phosphoserine. K661 bears the N6-acetyllysine; alternate mark. Residue K661 forms a Glycyl lysine isopeptide (Lys-Gly) (interchain with G-Cter in ubiquitin); alternate linkage. A Glycyl lysine isopeptide (Lys-Gly) (interchain with G-Cter in ubiquitin) cross-link involves residue K667. K677 is subject to N6-acetyllysine; alternate. K677 participates in a covalent cross-link: Glycyl lysine isopeptide (Lys-Gly) (interchain with G-Cter in ubiquitin); alternate. Y686 carries the post-translational modification Phosphotyrosine. A Phosphoserine modification is found at S688. The interval 690-709 (VVSGDTSPRHLSNVSSTGSI) is disordered. Phosphoserine; alternate is present on S692. O-linked (GlcNAc...) serine; alternate glycosylation occurs at S692. Polar residues predominate over residues 693–708 (GDTSPRHLSNVSSTGS). Residue T695 is modified to Phosphothreonine. 4 positions are modified to phosphoserine: S696, S701, S708, and S714. The residue at position 719 (T719) is a Phosphothreonine.

In terms of assembly, interacts with MARK1, MARK2, MARK3 and MARK4. Interacts with SQSTM1 when polyubiquitinated. Interacts with PSMC2 through SQSTM1. Interacts with FKBP4. Binds to CSNK1D. Interacts with SGK1. Interacts with EPM2A; the interaction dephosphorylates MAPT at Ser-369. Interacts with PIN1. Interacts with LRRK2. Interacts with LRP1, leading to endocytosis; this interaction is reduced in the presence of LRPAP1/RAP. Post-translationally, polyubiquitinated. Requires functional TRAF6 and may provoke SQSTM1-dependent degradation by the proteasome. Phosphorylation at various serine and threonine residues in S-P or T-P motifs by proline-directed protein kinases (PDPK1, CDK1, CDK5, GSK3, MAPK) (a few sites per protein in interphase, more in mitosis), and at serine residues in K-X-G-S motifs by MAP/microtubule affinity-regulating kinase (MARK1, MARK2, MARK3, MARK4), causing detachment from microtubules, and their disassembly. Phosphorylated by PHK. Dephosphorylation at several serine and threonine residues by the serine/threonine phosphatase PPP5C. Phosphorylation at Ser-554 by BRSK1 and BRSK2 in neurons affects ability to bind microtubules and plays a role in neuron polarization. Phosphorylation at Ser-188 by SGK1 mediates microtubule depolymerization and neurite formation in hippocampal neurons. Expressed in neurons and at a lower level in the liver and kidney. Isoform PNS-tau is expressed in the peripheral nervous system while the others are expressed in the central nervous system.

The protein localises to the cytoplasm. It localises to the cytosol. Its subcellular location is the cell membrane. It is found in the cytoskeleton. The protein resides in the cell projection. The protein localises to the axon. It localises to the dendrite. Its subcellular location is the secreted. Promotes microtubule assembly and stability, and might be involved in the establishment and maintenance of neuronal polarity. The C-terminus binds axonal microtubules while the N-terminus binds neural plasma membrane components, suggesting that tau functions as a linker protein between both. Axonal polarity is predetermined by tau localization (in the neuronal cell) in the domain of the cell body defined by the centrosome. The short isoforms allow plasticity of the cytoskeleton whereas the longer isoforms may preferentially play a role in its stabilization. The polypeptide is Microtubule-associated protein tau (Mus musculus (Mouse)).